Consider the following 356-residue polypeptide: Protein RecA (356 aa).

68–75 provides a ligand contact to ATP; it reads GQESSGKT.

The protein belongs to the RecA family.

It is found in the cytoplasm. Can catalyze the hydrolysis of ATP in the presence of single-stranded DNA, the ATP-dependent uptake of single-stranded DNA by duplex DNA, and the ATP-dependent hybridization of homologous single-stranded DNAs. It interacts with LexA causing its activation and leading to its autocatalytic cleavage. In Thermotoga sp. (strain RQ2), this protein is Protein RecA.